The sequence spans 78 residues: Large ribosomal subunit protein bL28 (78 aa).

This sequence belongs to the bacterial ribosomal protein bL28 family.

This chain is Large ribosomal subunit protein bL28, found in Marinobacter nauticus (strain ATCC 700491 / DSM 11845 / VT8) (Marinobacter aquaeolei).